The following is a 479-amino-acid chain: Ribosomal RNA small subunit methyltransferase F (479 aa).

S-adenosyl-L-methionine is bound by residues 128 to 134 (ASAPGSK), E152, D179, and D197. The active-site Nucleophile is the C250.

This sequence belongs to the class I-like SAM-binding methyltransferase superfamily. RsmB/NOP family.

It is found in the cytoplasm. It catalyses the reaction cytidine(1407) in 16S rRNA + S-adenosyl-L-methionine = 5-methylcytidine(1407) in 16S rRNA + S-adenosyl-L-homocysteine + H(+). Specifically methylates the cytosine at position 1407 (m5C1407) of 16S rRNA. This Shewanella halifaxensis (strain HAW-EB4) protein is Ribosomal RNA small subunit methyltransferase F.